The sequence spans 216 residues: Phosphatidylserine decarboxylase proenzyme (216 aa).

Ser-185 serves as the catalytic Schiff-base intermediate with substrate; via pyruvic acid. Pyruvic acid (Ser); by autocatalysis is present on Ser-185.

It belongs to the phosphatidylserine decarboxylase family. PSD-A subfamily. Heterodimer of a large membrane-associated beta subunit and a small pyruvoyl-containing alpha subunit. Requires pyruvate as cofactor. In terms of processing, is synthesized initially as an inactive proenzyme. Formation of the active enzyme involves a self-maturation process in which the active site pyruvoyl group is generated from an internal serine residue via an autocatalytic post-translational modification. Two non-identical subunits are generated from the proenzyme in this reaction, and the pyruvate is formed at the N-terminus of the alpha chain, which is derived from the carboxyl end of the proenzyme. The post-translation cleavage follows an unusual pathway, termed non-hydrolytic serinolysis, in which the side chain hydroxyl group of the serine supplies its oxygen atom to form the C-terminus of the beta chain, while the remainder of the serine residue undergoes an oxidative deamination to produce ammonia and the pyruvoyl prosthetic group on the alpha chain.

The protein resides in the cell membrane. The catalysed reaction is a 1,2-diacyl-sn-glycero-3-phospho-L-serine + H(+) = a 1,2-diacyl-sn-glycero-3-phosphoethanolamine + CO2. The protein operates within phospholipid metabolism; phosphatidylethanolamine biosynthesis; phosphatidylethanolamine from CDP-diacylglycerol: step 2/2. Catalyzes the formation of phosphatidylethanolamine (PtdEtn) from phosphatidylserine (PtdSer). The sequence is that of Phosphatidylserine decarboxylase proenzyme from Nitrosomonas eutropha (strain DSM 101675 / C91 / Nm57).